The chain runs to 331 residues: L-lactate dehydrogenase A chain (331 aa).

Residues 29–57 and arginine 98 each bind NAD(+); that span reads GMVG…MEDK. Residues arginine 105, asparagine 137, and arginine 168 each contribute to the substrate site. Residue asparagine 137 coordinates NAD(+). Histidine 192 (proton acceptor) is an active-site residue. Threonine 247 provides a ligand contact to substrate.

This sequence belongs to the LDH/MDH superfamily. LDH family. Homotetramer.

It localises to the cytoplasm. The enzyme catalyses (S)-lactate + NAD(+) = pyruvate + NADH + H(+). Its pathway is fermentation; pyruvate fermentation to lactate; (S)-lactate from pyruvate: step 1/1. In terms of biological role, interconverts simultaneously and stereospecifically pyruvate and lactate with concomitant interconversion of NADH and NAD(+). In Dissostichus eleginoides (Patagonian toothfish), this protein is L-lactate dehydrogenase A chain (ldha).